Reading from the N-terminus, the 49-residue chain is Large ribosomal subunit protein bL33 (49 aa).

The protein belongs to the bacterial ribosomal protein bL33 family.

The protein is Large ribosomal subunit protein bL33 of Clostridium perfringens (strain ATCC 13124 / DSM 756 / JCM 1290 / NCIMB 6125 / NCTC 8237 / Type A).